A 184-amino-acid chain; its full sequence is Effector CFEM1 (184 aa).

Residues 1-17 (MKYSVAFVALAAVAAQA) form the signal peptide. The CFEM domain maps to 18-112 (QSLADVPKCA…PTTTAAATST (95 aa)). 4 cysteine pairs are disulfide-bonded: C26-C68, C30-C63, C41-C48, and C50-C85. Residue D45 coordinates heme. 2 disordered regions span residues 83 to 106 (NLCK…PTTT) and 136 to 163 (IIPT…EQAN). The segment covering 88 to 103 (PPKESEAKSTAEEEKP) has biased composition (basic and acidic residues). The GPI-anchor amidated asparagine moiety is linked to residue N163. A propeptide spans 164 to 184 (GAAGLKGLGALAMAAFAALAL) (removed in mature form).

This sequence belongs to the RBT5 family. Interacts with Z.mays LRR5; the interaction is direct. Interacts (via CFEM domain) with Z.mays WAK17 isoform 2; the interaction is direct.

The protein localises to the secreted. The protein resides in the cell wall. It localises to the cell membrane. Its subcellular location is the cell septum. It is found in the cytoplasm. Suppresses host programmed cell death during infection by binding to Z.mays WAK17 isoform 2 and Z.mays LRR5, to prevent activation of Z.mays WAK17 isoform 1 and the downstream hypersensitive response. In Gibberella zeae (strain ATCC MYA-4620 / CBS 123657 / FGSC 9075 / NRRL 31084 / PH-1) (Wheat head blight fungus), this protein is Effector CFEM1.